The primary structure comprises 376 residues: Lipoyl synthase 1, mitochondrial (376 aa).

7 residues coordinate [4Fe-4S] cluster: cysteine 109, cysteine 114, cysteine 120, cysteine 140, cysteine 144, cysteine 147, and serine 356. One can recognise a Radical SAM core domain in the interval 125–345; that stretch reads ETGTATATIM…QTLGMEMGFR (221 aa).

It belongs to the radical SAM superfamily. Lipoyl synthase family. It depends on [4Fe-4S] cluster as a cofactor.

It is found in the mitochondrion. It catalyses the reaction [[Fe-S] cluster scaffold protein carrying a second [4Fe-4S](2+) cluster] + N(6)-octanoyl-L-lysyl-[protein] + 2 oxidized [2Fe-2S]-[ferredoxin] + 2 S-adenosyl-L-methionine + 4 H(+) = [[Fe-S] cluster scaffold protein] + N(6)-[(R)-dihydrolipoyl]-L-lysyl-[protein] + 4 Fe(3+) + 2 hydrogen sulfide + 2 5'-deoxyadenosine + 2 L-methionine + 2 reduced [2Fe-2S]-[ferredoxin]. The protein operates within protein modification; protein lipoylation via endogenous pathway; protein N(6)-(lipoyl)lysine from octanoyl-[acyl-carrier-protein]: step 2/2. Its function is as follows. Catalyzes the radical-mediated insertion of two sulfur atoms into the C-6 and C-8 positions of the octanoyl moiety bound to the lipoyl domains of lipoate-dependent enzymes, thereby converting the octanoylated domains into lipoylated derivatives. The protein is Lipoyl synthase 1, mitochondrial of Pisum sativum (Garden pea).